A 247-amino-acid chain; its full sequence is DNA repair protein RecO (247 aa).

This sequence belongs to the RecO family.

In terms of biological role, involved in DNA repair and RecF pathway recombination. This is DNA repair protein RecO from Methylocella silvestris (strain DSM 15510 / CIP 108128 / LMG 27833 / NCIMB 13906 / BL2).